The primary structure comprises 302 residues: Ventral anterior homeobox 2a (302 aa).

Disordered stretches follow at residues 1 to 35, 50 to 73, 156 to 175, 199 to 223, and 282 to 302; these read MFDQ…RDKG, KDIP…SQST, RRTK…SSST, PPNL…LGTS, and AFEP…KSTS. Positions 105–164 form a DNA-binding region, homeobox; sequence PKRTRTSFTAEQLYRLELEFQRCQYVVGRERTELARQLNLSETQVKVWFQNRRTKQKKDQ. Basic and acidic residues predominate over residues 161 to 172; it reads KKDQSRDSEKRS. Residues 204–223 show a composition bias toward low complexity; sequence SSSQNNMGTSSGNGTNLGTS. Residues 287–296 are compositionally biased toward basic and acidic residues; that stretch reads TRLDRKDTAS.

Belongs to the EMX homeobox family.

The protein localises to the nucleus. In terms of biological role, transcription factor that may function in dorsoventral specification of the forebrain. Regulates the expression of Wnt signaling antagonists including the expression of a truncated tcf7l2 isoform that cannot bind ctnnb1 and acts therefore as a potent dominant-negative Wnt antagonist. Plays a crucial role in eye development and, in particular, in the specification of the ventral optic vesicle. May be a regulator of axial polarization in the retina. The polypeptide is Ventral anterior homeobox 2a (vax2-a) (Xenopus laevis (African clawed frog)).